The following is a 1479-amino-acid chain: Putative receptor-type tyrosine-protein phosphatase mosPTP-1 (1479 aa).

An N-terminal signal peptide occupies residues 1–28 (MKPRLLTTVTTWLALVLPVVYLSRPCQA). At 29-365 (LPTVNFTANY…RQSYNDYNLA (337 aa)) the chain is on the extracellular side. Asn33, Asn40, Asn146, Asn182, Asn248, Asn294, and Asn306 each carry an N-linked (GlcNAc...) asparagine glycan. Fibronectin type-III domains lie at 143 to 242 (KPLN…AGPS) and 243 to 346 (APKV…VQLN). The chain crosses the membrane as a helical span at residues 366–386 (VMIGILICCFGLLFIVLTILL). The Cytoplasmic segment spans residues 387 to 1479 (WKKCFHAAYY…AKLRAVVRVE (1093 aa)). Tyrosine-protein phosphatase domains are found at residues 452-717 (FSKE…LVEA) and 740-992 (IDSQ…LSYM). The active-site Phosphocysteine intermediate is the Cys658.

It belongs to the protein-tyrosine phosphatase family. Receptor class subfamily. As to quaternary structure, interacts with C-type lectin mosGCTL-1. Interacts with C-type lectin mosGCTL-7.

The protein resides in the cell membrane. It catalyses the reaction O-phospho-L-tyrosyl-[protein] + H2O = L-tyrosyl-[protein] + phosphate. In terms of biological role, putative protein tyrosine-protein phosphatase. (Microbial infection) Facilitates West Nile virus infection in mosquitoes. This chain is Putative receptor-type tyrosine-protein phosphatase mosPTP-1, found in Culex quinquefasciatus (Southern house mosquito).